Consider the following 439-residue polypeptide: Xylose isomerase (439 aa).

Residues histidine 101 and aspartate 104 contribute to the active site. Residues glutamate 232, glutamate 268, histidine 271, aspartate 296, aspartate 307, aspartate 309, and aspartate 339 each contribute to the Mg(2+) site.

The protein belongs to the xylose isomerase family. In terms of assembly, homotetramer. Mg(2+) serves as cofactor.

The protein resides in the cytoplasm. It carries out the reaction alpha-D-xylose = alpha-D-xylulofuranose. This chain is Xylose isomerase, found in Pectobacterium atrosepticum (strain SCRI 1043 / ATCC BAA-672) (Erwinia carotovora subsp. atroseptica).